Here is a 336-residue protein sequence, read N- to C-terminus: Holliday junction branch migration complex subunit RuvB (336 aa).

The interval 4-184 (ADRLIQPQVQ…FGIPLRLEFY (181 aa)) is large ATPase domain (RuvB-L). Residues Arg24, Gly65, Lys68, Thr69, Thr70, 131-133 (EDY), Arg174, Tyr184, and Arg221 each bind ATP. A Mg(2+)-binding site is contributed by Thr69. Residues 185–255 (NVADLTTIVT…VAEYALDLLD (71 aa)) are small ATPAse domain (RuvB-S). Residues 258 to 336 (DQGFDYLDRK…HFSLVRPEKA (79 aa)) are head domain (RuvB-H). DNA-binding residues include Arg294, Arg313, and Arg318.

Belongs to the RuvB family. Homohexamer. Forms an RuvA(8)-RuvB(12)-Holliday junction (HJ) complex. HJ DNA is sandwiched between 2 RuvA tetramers; dsDNA enters through RuvA and exits via RuvB. An RuvB hexamer assembles on each DNA strand where it exits the tetramer. Each RuvB hexamer is contacted by two RuvA subunits (via domain III) on 2 adjacent RuvB subunits; this complex drives branch migration. In the full resolvosome a probable DNA-RuvA(4)-RuvB(12)-RuvC(2) complex forms which resolves the HJ.

It localises to the cytoplasm. It carries out the reaction ATP + H2O = ADP + phosphate + H(+). Its function is as follows. The RuvA-RuvB-RuvC complex processes Holliday junction (HJ) DNA during genetic recombination and DNA repair, while the RuvA-RuvB complex plays an important role in the rescue of blocked DNA replication forks via replication fork reversal (RFR). RuvA specifically binds to HJ cruciform DNA, conferring on it an open structure. The RuvB hexamer acts as an ATP-dependent pump, pulling dsDNA into and through the RuvAB complex. RuvB forms 2 homohexamers on either side of HJ DNA bound by 1 or 2 RuvA tetramers; 4 subunits per hexamer contact DNA at a time. Coordinated motions by a converter formed by DNA-disengaged RuvB subunits stimulates ATP hydrolysis and nucleotide exchange. Immobilization of the converter enables RuvB to convert the ATP-contained energy into a lever motion, pulling 2 nucleotides of DNA out of the RuvA tetramer per ATP hydrolyzed, thus driving DNA branch migration. The RuvB motors rotate together with the DNA substrate, which together with the progressing nucleotide cycle form the mechanistic basis for DNA recombination by continuous HJ branch migration. Branch migration allows RuvC to scan DNA until it finds its consensus sequence, where it cleaves and resolves cruciform DNA. The chain is Holliday junction branch migration complex subunit RuvB from Shewanella frigidimarina (strain NCIMB 400).